Reading from the N-terminus, the 308-residue chain is Protoheme IX farnesyltransferase (308 aa).

9 consecutive transmembrane segments (helical) span residues 31 to 51 (VGIV…AFYF), 60 to 80 (LDIV…SCVI), 110 to 130 (ALWF…MTNL), 131 to 151 (TAAG…TMWS), 157 to 177 (VNTI…WTAV), 185 to 205 (AWVL…ALAI), 232 to 252 (IIIW…LGLP), 253 to 273 (IVIL…VGYR), and 285 to 305 (FVYS…FTLF).

This sequence belongs to the UbiA prenyltransferase family. Protoheme IX farnesyltransferase subfamily. Interacts with CtaA.

Its subcellular location is the cell membrane. It catalyses the reaction heme b + (2E,6E)-farnesyl diphosphate + H2O = Fe(II)-heme o + diphosphate. It participates in porphyrin-containing compound metabolism; heme O biosynthesis; heme O from protoheme: step 1/1. Converts heme B (protoheme IX) to heme O by substitution of the vinyl group on carbon 2 of heme B porphyrin ring with a hydroxyethyl farnesyl side group. The sequence is that of Protoheme IX farnesyltransferase from Bacillus licheniformis (strain ATCC 14580 / DSM 13 / JCM 2505 / CCUG 7422 / NBRC 12200 / NCIMB 9375 / NCTC 10341 / NRRL NRS-1264 / Gibson 46).